Reading from the N-terminus, the 291-residue chain is Tryptophan 2,3-dioxygenase (291 aa).

Substrate contacts are provided by residues 51–55 (FIIQH), tyrosine 113, and arginine 117. Histidine 240 is a heme binding site. Residue threonine 254 coordinates substrate.

Belongs to the tryptophan 2,3-dioxygenase family. Homotetramer. Heme is required as a cofactor.

It carries out the reaction L-tryptophan + O2 = N-formyl-L-kynurenine. Its pathway is amino-acid degradation; L-tryptophan degradation via kynurenine pathway; L-kynurenine from L-tryptophan: step 1/2. Heme-dependent dioxygenase that catalyzes the oxidative cleavage of the L-tryptophan (L-Trp) pyrrole ring and converts L-tryptophan to N-formyl-L-kynurenine. Catalyzes the oxidative cleavage of the indole moiety. This chain is Tryptophan 2,3-dioxygenase, found in Myxococcus xanthus (strain DK1622).